Here is a 301-residue protein sequence, read N- to C-terminus: Acetylglutamate kinase (301 aa).

Residues G72–G73, R94, and N199 contribute to the substrate site.

The protein belongs to the acetylglutamate kinase family. ArgB subfamily.

Its subcellular location is the cytoplasm. The catalysed reaction is N-acetyl-L-glutamate + ATP = N-acetyl-L-glutamyl 5-phosphate + ADP. Its pathway is amino-acid biosynthesis; L-arginine biosynthesis; N(2)-acetyl-L-ornithine from L-glutamate: step 2/4. Its function is as follows. Catalyzes the ATP-dependent phosphorylation of N-acetyl-L-glutamate. The polypeptide is Acetylglutamate kinase (Bartonella quintana (strain Toulouse) (Rochalimaea quintana)).